A 452-amino-acid chain; its full sequence is Pup--protein ligase (452 aa).

Residue Glu-9 coordinates Mg(2+). Residue Arg-53 participates in ATP binding. Tyr-55 lines the Mg(2+) pocket. The active-site Proton acceptor is the Asp-57. Residue Glu-63 coordinates Mg(2+). ATP is bound by residues Thr-66 and Trp-419.

The protein belongs to the Pup ligase/Pup deamidase family. Pup-conjugating enzyme subfamily.

It carries out the reaction ATP + [prokaryotic ubiquitin-like protein]-L-glutamate + [protein]-L-lysine = ADP + phosphate + N(6)-([prokaryotic ubiquitin-like protein]-gamma-L-glutamyl)-[protein]-L-lysine.. The protein operates within protein degradation; proteasomal Pup-dependent pathway. Its pathway is protein modification; protein pupylation. Catalyzes the covalent attachment of the prokaryotic ubiquitin-like protein modifier Pup to the proteasomal substrate proteins, thereby targeting them for proteasomal degradation. This tagging system is termed pupylation. The ligation reaction involves the side-chain carboxylate of the C-terminal glutamate of Pup and the side-chain amino group of a substrate lysine. This Salinispora arenicola (strain CNS-205) protein is Pup--protein ligase.